The primary structure comprises 569 residues: uncharacterized protein (569 aa).

A signal peptide spans 1 to 24 (MKFQRKYWGLLSTLGVSSAVALSA). Cys-25 carries N-palmitoyl cysteine lipidation. The S-diacylglycerol cysteine moiety is linked to residue Cys-25. 2 disordered regions span residues 111–137 (SNMK…EWEV) and 242–267 (GKNG…KKIE). Low complexity-rich tracts occupy residues 119 to 130 (SSSSSSTGNNGS) and 249 to 260 (KKMTTDSSSTQQ).

It to M.pneumoniae MPN_456 and M.genitalium MG321 N-terminal region.

It is found in the cell membrane. This is an uncharacterized protein from Mycoplasma pneumoniae (strain ATCC 29342 / M129 / Subtype 1) (Mycoplasmoides pneumoniae).